We begin with the raw amino-acid sequence, 298 residues long: tRNA pseudouridine synthase B (298 aa).

Aspartate 44 acts as the Nucleophile in catalysis.

This sequence belongs to the pseudouridine synthase TruB family. Type 1 subfamily.

It catalyses the reaction uridine(55) in tRNA = pseudouridine(55) in tRNA. Its function is as follows. Responsible for synthesis of pseudouridine from uracil-55 in the psi GC loop of transfer RNAs. The polypeptide is tRNA pseudouridine synthase B (Mycobacteroides abscessus (strain ATCC 19977 / DSM 44196 / CCUG 20993 / CIP 104536 / JCM 13569 / NCTC 13031 / TMC 1543 / L948) (Mycobacterium abscessus)).